Consider the following 341-residue polypeptide: S-adenosylmethionine:tRNA ribosyltransferase-isomerase (341 aa).

The protein belongs to the QueA family. Monomer.

It localises to the cytoplasm. The enzyme catalyses 7-aminomethyl-7-carbaguanosine(34) in tRNA + S-adenosyl-L-methionine = epoxyqueuosine(34) in tRNA + adenine + L-methionine + 2 H(+). The protein operates within tRNA modification; tRNA-queuosine biosynthesis. Transfers and isomerizes the ribose moiety from AdoMet to the 7-aminomethyl group of 7-deazaguanine (preQ1-tRNA) to give epoxyqueuosine (oQ-tRNA). This chain is S-adenosylmethionine:tRNA ribosyltransferase-isomerase, found in Staphylococcus saprophyticus subsp. saprophyticus (strain ATCC 15305 / DSM 20229 / NCIMB 8711 / NCTC 7292 / S-41).